The chain runs to 452 residues: Nuclear distribution protein PAC1 (452 aa).

Residues 12–44 (QKDELHKAILAYFSASGLSNTGAALREELGVGD) enclose the LisH domain. The stretch at 64–91 (TGVLRLQKKIMELESRLSSLQSELDSAT) forms a coiled coil. WD repeat units lie at residues 117-158 (SHRN…RTVK), 160-200 (HTKA…KNIR), 204-245 (GHDH…CVKT), 248-287 (GHSD…HKAT), 290-350 (GHEH…LKTL), 352-391 (GHDN…RCVK), 396-435 (AHSH…INVR), and 437-452 (VIAT…VFAS).

Belongs to the WD repeat LIS1/nudF family. Self-associates. Interacts with NDL1 and dynein.

The protein localises to the cytoplasm. The protein resides in the cytoskeleton. Its subcellular location is the spindle pole. Functionally, positively regulates the activity of the minus-end directed microtubule motor protein dynein. May enhance dynein-mediated microtubule sliding by targeting dynein to the microtubule plus end. Required for nuclear migration during vegetative growth as well as development. Required for retrograde early endosome (EE) transport from the hyphal tip. Required for localization of dynein to the mitotic spindle poles. Recruits additional proteins to the dynein complex at SPBs. The polypeptide is Nuclear distribution protein PAC1 (Tuber melanosporum (strain Mel28) (Perigord black truffle)).